Here is an 844-residue protein sequence, read N- to C-terminus: Translation initiation factor IF-2 (844 aa).

Residues 1–11 show a composition bias toward basic and acidic residues; it reads MTEDVKADAPK. Disordered stretches follow at residues 1–48 and 79–249; these read MTED…VKTD and RLEA…GTAL. The span at 21 to 30 shows a compositional bias: low complexity; the sequence is TTVSSTTTGG. Positions 79-161 are enriched in basic and acidic residues; it reads RLEAEKAATK…AAEEAKRYAE (83 aa). Acidic residues predominate over residues 162-175; the sequence is ADDSDNESSSEDYS. The span at 200 to 210 shows a compositional bias: basic residues; it reads RGKNKVAKAKK. The segment covering 211–237 has biased composition (basic and acidic residues); sequence GGRDDENSKNSKNERESNRKNQKDAKF. Positions 343–513 constitute a tr-type G domain; that stretch reads TRAPVVTIMG…LLQSEVLELT (171 aa). The interval 352–359 is G1; sequence GHVDHGKT. 352–359 is a GTP binding site; that stretch reads GHVDHGKT. The tract at residues 377–381 is G2; the sequence is GITQH. The G3 stretch occupies residues 399–402; the sequence is DTPG. GTP is bound by residues 399 to 403 and 453 to 456; these read DTPGH and NKID. Residues 453–456 are G4; that stretch reads NKID. Residues 489 to 491 form a G5 region; it reads SAK.

Belongs to the TRAFAC class translation factor GTPase superfamily. Classic translation factor GTPase family. IF-2 subfamily.

It is found in the cytoplasm. Its function is as follows. One of the essential components for the initiation of protein synthesis. Protects formylmethionyl-tRNA from spontaneous hydrolysis and promotes its binding to the 30S ribosomal subunits. Also involved in the hydrolysis of GTP during the formation of the 70S ribosomal complex. This chain is Translation initiation factor IF-2, found in Haemophilus influenzae (strain 86-028NP).